The chain runs to 146 residues: Large ribosomal subunit protein uL15 (146 aa).

Residues 1–13 are compositionally biased toward basic and acidic residues; it reads MKLHELKPAEGSR. The segment at 1 to 60 is disordered; it reads MKLHELKPAEGSRKQRNRVGRGIGSGNGKTAGKGHKGQNARSGGGVRPGFEGGQNPLFRR. Gly residues-rich tracts occupy residues 21–31 and 42–52; these read RGIGSGNGKTA and SGGGVRPGFEG.

The protein belongs to the universal ribosomal protein uL15 family. As to quaternary structure, part of the 50S ribosomal subunit.

Its function is as follows. Binds to the 23S rRNA. The sequence is that of Large ribosomal subunit protein uL15 from Lysinibacillus sphaericus (strain C3-41).